Reading from the N-terminus, the 156-residue chain is Ribosomal RNA large subunit methyltransferase H (156 aa).

Residues leucine 73, glycine 104, and 123–128 (LSPLTL) contribute to the S-adenosyl-L-methionine site.

The protein belongs to the RNA methyltransferase RlmH family. In terms of assembly, homodimer.

Its subcellular location is the cytoplasm. It carries out the reaction pseudouridine(1915) in 23S rRNA + S-adenosyl-L-methionine = N(3)-methylpseudouridine(1915) in 23S rRNA + S-adenosyl-L-homocysteine + H(+). Specifically methylates the pseudouridine at position 1915 (m3Psi1915) in 23S rRNA. The chain is Ribosomal RNA large subunit methyltransferase H from Serratia proteamaculans (strain 568).